The chain runs to 147 residues: Nucleoside diphosphate kinase (147 aa).

6 residues coordinate ATP: Lys9, Phe57, Arg85, Thr91, Arg102, and Asn112. Thr91 bears the Phosphothreonine mark. Residue His115 is the Pros-phosphohistidine intermediate of the active site. Ser122 is subject to Phosphoserine.

Belongs to the NDK family. As to quaternary structure, homotetramer. It depends on Mg(2+) as a cofactor.

It localises to the cytoplasm. The catalysed reaction is a 2'-deoxyribonucleoside 5'-diphosphate + ATP = a 2'-deoxyribonucleoside 5'-triphosphate + ADP. The enzyme catalyses a ribonucleoside 5'-diphosphate + ATP = a ribonucleoside 5'-triphosphate + ADP. Major role in the synthesis of nucleoside triphosphates other than ATP. The ATP gamma phosphate is transferred to the NDP beta phosphate via a ping-pong mechanism, using a phosphorylated active-site intermediate. The polypeptide is Nucleoside diphosphate kinase (Halalkalibacterium halodurans (strain ATCC BAA-125 / DSM 18197 / FERM 7344 / JCM 9153 / C-125) (Bacillus halodurans)).